Here is a 214-residue protein sequence, read N- to C-terminus: Potassium/proton antiporter CemA (214 aa).

2 consecutive transmembrane segments (helical) span residues 92 to 112 and 174 to 194; these read ILHLSTNIICFIIFRGYSILG and IISGLVSTFPVILDTIFKYWI.

Belongs to the CemA family.

It localises to the plastid. The protein localises to the chloroplast inner membrane. The catalysed reaction is K(+)(in) + H(+)(out) = K(+)(out) + H(+)(in). Functionally, contributes to K(+)/H(+) antiport activity by supporting proton efflux to control proton extrusion and homeostasis in chloroplasts in a light-dependent manner to modulate photosynthesis. Prevents excessive induction of non-photochemical quenching (NPQ) under continuous-light conditions. Indirectly promotes efficient inorganic carbon uptake into chloroplasts. The polypeptide is Potassium/proton antiporter CemA (Oenothera argillicola (Appalachian evening primrose)).